The following is a 305-amino-acid chain: uncharacterized protein (305 aa).

The next 10 membrane-spanning stretches (helical) occupy residues 11 to 31, 37 to 57, 70 to 90, 97 to 117, 126 to 146, 148 to 168, 180 to 200, 217 to 237, 244 to 264, and 265 to 285; these read LLLA…KAAL, LLFA…VALP, IYLV…TIGL, LFSA…WLWL, VIGL…GFGG, ISVI…LGTV, IWMV…SGFW, LLFI…TLVG, VASY…IFLH, and EPLT…ICLV. EamA domains lie at 18–141 and 161–287; these read IMWG…VISA and VSWA…LVNT.

It belongs to the EamA transporter family.

Its subcellular location is the cell membrane. This is an uncharacterized protein from Bacillus subtilis (strain 168).